A 23-amino-acid polypeptide reads, in one-letter code: Ascaphin-1 (23 aa).

Position 23 is an asparagine amide (Asn-23).

As to expression, expressed by the skin glands.

The protein localises to the secreted. Antimicrobial peptide that shows higher potency against Gram-negative bacteria than against Gram-positive bacteria. Has a very week hemolytic activity. The sequence is that of Ascaphin-1 from Ascaphus truei (Coastal tailed frog).